The sequence spans 126 residues: Type II methyltransferase M.HgiGI (126 aa).

One can recognise an SAM-dependent MTase C5-type domain in the interval 1-126 (MKTIDLFAGC…ARLSKIHQQA (126 aa)). Cys75 is an active-site residue.

Belongs to the class I-like SAM-binding methyltransferase superfamily. C5-methyltransferase family.

It catalyses the reaction a 2'-deoxycytidine in DNA + S-adenosyl-L-methionine = a 5-methyl-2'-deoxycytidine in DNA + S-adenosyl-L-homocysteine + H(+). Functionally, a methylase, recognizes the double-stranded sequence 5'-GRCGYC-3', methylates C-? on both strands, and protects the DNA from cleavage by the HgiEI endonuclease. The chain is Type II methyltransferase M.HgiGI from Herpetosiphon aurantiacus (Herpetosiphon giganteus).